Here is a 440-residue protein sequence, read N- to C-terminus: Actin-like protein 7A (440 aa).

A disordered region spans residues 1-29 (MSLDGVWAPQTANIGDGPAKKASDQASMQ). Positions 36–56 (ASLKDGPAKRAVWVRRDNAET) are required for interaction with TES.

This sequence belongs to the actin family. As to quaternary structure, interacts (via N-terminus) with TES (via LIM domain 2). Heterodimer with TES; the heterodimer interacts with ENAH to form a heterotrimer. Interacts with ACTL9. Interacts with CYLC1; the interaction may be relevant for proper acrosome attachment to the nuclear envelope. In terms of tissue distribution, detected in testis. Detected at the acrosome of round spermatids (at protein level). Detected in adult and embryonic testis. Detected in developing male germ cells.

The protein localises to the cytoplasm. The protein resides in the cytoskeleton. Its subcellular location is the golgi apparatus. It localises to the nucleus. It is found in the cytoplasmic vesicle. The protein localises to the secretory vesicle. The protein resides in the acrosome. Functionally, essential for normal spermatogenesis and male fertility. Required for normal sperm head morphology, acroplaxome formation, acrosome attachment, and acrosome granule stability. May anchor and stabilize acrosomal adherence to the acroplaxome at least in part by facilitating the presence of F-actin in the subacrosomal space. May play an important role in formation and fusion of Golgi-derived vesicles during acrosome biogenesis. The polypeptide is Actin-like protein 7A (Actl7a) (Mus musculus (Mouse)).